A 155-amino-acid chain; its full sequence is Class I hydrophobin C (155 aa).

The N-terminal stretch at 1–22 is a signal peptide; sequence MLVTMRLSRSIAVFTLVTYATG. 4 disulfides stabilise this stretch: cysteine 52-cysteine 129, cysteine 60-cysteine 123, cysteine 61-cysteine 101, and cysteine 130-cysteine 148.

It belongs to the fungal hydrophobin family. Self-assembles to form functional amyloid fibrils called rodlets. Self-assembly into fibrillar rodlets occurs spontaneously at hydrophobic:hydrophilic interfaces and the rodlets further associate laterally to form amphipathic monolayers.

The protein localises to the secreted. It is found in the spore wall. Functionally, aerial growth, conidiation, and dispersal of filamentous fungi in the environment rely upon a capability of their secreting small amphipathic proteins called hydrophobins (HPBs) with low sequence identity. Class I can self-assemble into an outermost layer of rodlet bundles on aerial cell surfaces, conferring cellular hydrophobicity that supports fungal growth, development and dispersal; whereas Class II form highly ordered films at water-air interfaces through intermolecular interactions but contribute nothing to the rodlet structure. RodC is a class I hydrophobin that, unlike rodA, is not required for rodlet formation. The protein is Class I hydrophobin C of Aspergillus fumigatus (strain ATCC MYA-4609 / CBS 101355 / FGSC A1100 / Af293) (Neosartorya fumigata).